Reading from the N-terminus, the 103-residue chain is Hexon-interlacing protein (103 aa).

A coiled-coil region spans residues 72–99 (LDELKIQVAAMQNSVTAIQREVNDLKQR).

The protein belongs to the adenoviridae hexon-interlacing protein family. As to quaternary structure, homotrimer. Interacts with hexon protein; this interaction tethers the hexons together. Self-interacts with adjacent proteins. Interacts with kinesin light chain KLC1; this interaction leads to capsid disruption at the nuclear pore complex during virus entry into host cell.

It localises to the virion. Its subcellular location is the host nucleus. In terms of biological role, structural component of the virion that acts as a cement protein on the capsid exterior and forms triskelion structures consisting of three molecules that stabilize three hexon trimers at the center of each icosahedral facet and fixes the peripentonal hexons. Dispensable for assembly. During virus entry, recruits the anterograde motor kinesin-1 to the capsid docked at the nuclear pore complex thereby subjecting the docked capsid to a pulling force. The resulting tension leads to capsid disruption, dispersion of capsid fragments toward cell periphery and eventually viral DNA entry into the host nucleus. In Canis lupus familiaris (Dog), this protein is Hexon-interlacing protein.